We begin with the raw amino-acid sequence, 702 residues long: Polyribonucleotide nucleotidyltransferase (702 aa).

Mg(2+)-binding residues include aspartate 485 and aspartate 491. In terms of domain architecture, KH spans 552-612 (PRTEIICIDP…EGVKKAISII (61 aa)). Residues 622-690 (GEIYLGKVTK…NQGRINLSRK (69 aa)) form the S1 motif domain.

Belongs to the polyribonucleotide nucleotidyltransferase family. Mg(2+) is required as a cofactor.

Its subcellular location is the cytoplasm. The enzyme catalyses RNA(n+1) + phosphate = RNA(n) + a ribonucleoside 5'-diphosphate. Involved in mRNA degradation. Catalyzes the phosphorolysis of single-stranded polyribonucleotides processively in the 3'- to 5'-direction. The sequence is that of Polyribonucleotide nucleotidyltransferase from Clostridium botulinum (strain Langeland / NCTC 10281 / Type F).